A 449-amino-acid polypeptide reads, in one-letter code: MKIQDFKNKKVMVFGWARSGKAAAQRLVELSAIVTVVNGGAFDTDETIYQKLLAAGVTFINHDDDQAIDKSFDFLVKNPGIPYETAIVKKALVLDIPVLTEVEVALSSFDGRLIAVTGSNGKTTTTSLIRDMLKASGQTVTTAGNIGTPVSEVVGPLTSQDTLLLELSSFQLMGLPDIKPDIALITNIFANHLDYHGDRAHYVAAKYQITKNQTANQKLILNADGADTPDFAAKTQAQVVLFSRDNSSDMAWTDGHDLIIEGEHVMPLTAIKLVGPHNLENILAAITVSKIAGVTNEAIKSVLEVFGGVPHRLQYLLTENGVRYYNDSKATDIEATQTALDSFHEPTIWLAGGLDRGDDLTRLIPNLSHVKLVIAFGETQQKVVAIARQAHKPVITVTSVKEAVPVAISSSSAGDVVLLSPAAASWDQYPNFEVRGDEFVNELKENLGV.

118–124 (GSNGKTT) contributes to the ATP binding site.

This sequence belongs to the MurCDEF family.

Its subcellular location is the cytoplasm. The catalysed reaction is UDP-N-acetyl-alpha-D-muramoyl-L-alanine + D-glutamate + ATP = UDP-N-acetyl-alpha-D-muramoyl-L-alanyl-D-glutamate + ADP + phosphate + H(+). It functions in the pathway cell wall biogenesis; peptidoglycan biosynthesis. Functionally, cell wall formation. Catalyzes the addition of glutamate to the nucleotide precursor UDP-N-acetylmuramoyl-L-alanine (UMA). This chain is UDP-N-acetylmuramoylalanine--D-glutamate ligase, found in Leuconostoc citreum (strain KM20).